Reading from the N-terminus, the 862-residue chain is Taxadiene synthase (862 aa).

Mg(2+) contacts are provided by Asp613, Asp617, Asn757, Thr761, and Glu765. The DDXXD motif signature appears at 613–617 (DDMAD).

It belongs to the terpene synthase family. Mg(2+) serves as cofactor.

The catalysed reaction is (2E,6E,10E)-geranylgeranyl diphosphate = taxa-4(5),11(12)-diene + diphosphate. The protein operates within alkaloid biosynthesis; taxol biosynthesis; taxa-4(20),11-dien-5alpha-ol from geranylgeranyl diphosphate: step 1/2. Functionally, catalyzes the cyclization of the ubiquitous isoprenoid intermediate geranylgeranyl diphosphate to taxa-4,11-diene, the parent olefin with a taxane skeleton. The polypeptide is Taxadiene synthase (TDC1) (Taxus baccata (English yew)).